Here is a 574-residue protein sequence, read N- to C-terminus: Arginine--tRNA ligase (574 aa).

The short motif at 121–131 (PNIAKEMHIGH) is the 'HIGH' region element.

The protein belongs to the class-I aminoacyl-tRNA synthetase family. Monomer.

It is found in the cytoplasm. The enzyme catalyses tRNA(Arg) + L-arginine + ATP = L-arginyl-tRNA(Arg) + AMP + diphosphate. This Buchnera aphidicola subsp. Acyrthosiphon pisum (strain 5A) protein is Arginine--tRNA ligase.